The chain runs to 250 residues: Aquaporin TIP2-2 (250 aa).

2 consecutive transmembrane segments (helical) span residues 22 to 42 and 54 to 74; these read VAEFIATLLFVFAGVGSAIAF and AGLVAIAVAHALALFVGVSVA. The NPA 1 motif lies at 83-85; that stretch reads NPA. 3 consecutive transmembrane segments (helical) span residues 97–119, 142–162, and 169–189; these read TVLTGLFYWVAQLLGASVACLLL, GVVFEIVITFALVYTVYATAA, and LGTIAPIAIGFIVGANILAAG. The short motif at 197–199 is the NPA 2 element; sequence NPA. A helical membrane pass occupies residues 218–238; that stretch reads WVGPLIGGGLAGLVYGDVFIG.

Belongs to the MIP/aquaporin (TC 1.A.8) family. TIP (TC 1.A.8.10) subfamily.

It localises to the vacuole membrane. Aquaporins facilitate the transport of water and small neutral solutes across cell membranes. The protein is Aquaporin TIP2-2 (TIP2-2) of Zea mays (Maize).